Consider the following 593-residue polypeptide: Developmental and secondary metabolism regulator VEL1 (593 aa).

Residues 1–16 (MSNIVVSNETKSQSVR) are compositionally biased toward polar residues. The tract at residues 1-21 (MSNIVVSNETKSQSVRTTKDG) is disordered. The region spanning 21-212 (GRQIRYNLQV…AEQGCRVRIR (192 aa)) is the Velvet domain. The Nuclear localization signal motif lies at 35 to 40 (ERARAC). The disordered stretch occupies residues 218-569 (RRRENKSSKE…PGSPDMEEPM (352 aa)). Residues 310–326 (PSYGSNQPQYSQQYQTP) are compositionally biased toward low complexity. Residues 327 to 340 (QPAPMMQPPQPPQH) show a composition bias toward pro residues. Composition is skewed to low complexity over residues 341 to 360 (STPY…HQAQ) and 367 to 389 (QQYG…QPQY). 2 stretches are compositionally biased toward polar residues: residues 413–429 (SSIT…SSHP) and 440–449 (GRSQQMSQPL). The segment at 443–487 (QQMSQPLHSSPQSYASSAPSHQSLPSLRPIVADKLEPVSPSYQSP) is PEST. The segment covering 450–465 (HSSPQSYASSAPSHQS) has biased composition (low complexity). 2 stretches are compositionally biased toward polar residues: residues 482 to 505 (PSYQ…SNQH) and 512 to 534 (NPQT…SSTF).

Belongs to the velvet family. VeA subfamily. As to quaternary structure, component of the heterotrimeric velvet complex composed of LAE1, VEL1 and VEL2; VEL1 acting as a bridging protein between LAE1 and VEL2.

It localises to the nucleus. The protein resides in the cytoplasm. In terms of biological role, component of the velvet transcription factor complex that controls sexual/asexual developmental ratio in response to light, promoting sexual development in the darkness while stimulating asexual sporulation under illumination. The velvet complex acts as a global regulator for secondary metabolite gene expression. Controls the expression of the T-toxin gene cluster. Promotes oxidative stress tolerance and acts as a virulence factors during infection. Negatively regulate mycelial pigmentation and controls sexual development, as well as asexual development during vegetative growth. The sequence is that of Developmental and secondary metabolism regulator VEL1 from Cochliobolus heterostrophus (strain C5 / ATCC 48332 / race O) (Southern corn leaf blight fungus).